The primary structure comprises 332 residues: Polyprenyl transferase yanG (332 aa).

8 helical membrane passes run 42 to 62 (IWGACVAAGVSDTVLEPLAFA), 72 to 92 (VTATHCAFCTFKSVPFCFFVV), 145 to 165 (PAVTVSFIPVWVLSVIYPFMK), 170 to 190 (FPQVVLGAIIGGAVFPGWVGV), 200 to 220 (ALPLFFATAAWVVYFDVFYAT), 242 to 262 (VKILLAGLGILQIAFFAMTAL), 266 to 286 (LSLIFWILGIGVWAVSVPWHV), and 300 to 320 (VFKANIKLGLYMTGVSLLELV).

The protein belongs to the UbiA prenyltransferase family. It depends on Mg(2+) as a cofactor.

It localises to the membrane. It functions in the pathway secondary metabolite biosynthesis; terpenoid biosynthesis. In terms of biological role, polyprenyl transferase; part of the gene cluster that mediates the biosynthesis of yanuthone D, a fungal isoprenoid epoxycyclohexenone that acts as an antibiotic against fungi and bacteria. The first step of the pathway is the synthesis of 6-methylsalicylic acid (6-MSA) by the polyketide synthase yanA. 6-MSA is then converted to m-cresol by the decarboxylase yanB. The cytochrome P450 monooxygenase yanC then catalyzes the oxidation of m-cresol to toluquinol. Epoxidation of toluquinol is then performed by the short chain dehydrogenase yanD, with the help of yanE, and a further prenylation by yanG leads to 7-deacetoxyyanuthone A. The next step is the hydroxylation of C-22 of 7-deacetoxyyanuthone A by the cytochrome P450 monooxygenase yanH to yield 22-deacetylyanuthone A. O-Mevalon transferase yanI then attaches mevalon to the hydroxyl group of 22-deacetylyanuthone A to produce yanuthone E. Finally, the FAD-dependent monooxygenase yanF oxidizes the hydroxyl group at C15 of yanuthone E to form yanuthone D. Furthermore, several branching points in the pathway lead to the production of yanuthones F and G from 7-deacetoxyyanuthone A; yanuthones H and I from 22-deacetylyanuthone A; and yanuthone J from yanuthone E. YanG is also involved in the synthesis of yanuthone X1 which does not have 6-methylsalicylic acid (6-MSA) as precursor. The sequence is that of Polyprenyl transferase yanG from Aspergillus niger (strain ATCC 1015 / CBS 113.46 / FGSC A1144 / LSHB Ac4 / NCTC 3858a / NRRL 328 / USDA 3528.7).